Consider the following 237-residue polypeptide: 7-cyano-7-deazaguanine synthase (237 aa).

Phe14 to Leu24 serves as a coordination point for ATP. Zn(2+)-binding residues include Cys202, Cys217, Cys220, and Cys223.

This sequence belongs to the QueC family. Requires Zn(2+) as cofactor.

It catalyses the reaction 7-carboxy-7-deazaguanine + NH4(+) + ATP = 7-cyano-7-deazaguanine + ADP + phosphate + H2O + H(+). Its pathway is purine metabolism; 7-cyano-7-deazaguanine biosynthesis. Catalyzes the ATP-dependent conversion of 7-carboxy-7-deazaguanine (CDG) to 7-cyano-7-deazaguanine (preQ(0)). The chain is 7-cyano-7-deazaguanine synthase from Rhodopseudomonas palustris (strain TIE-1).